A 395-amino-acid polypeptide reads, in one-letter code: Chaperone protein DnaJ 2 (395 aa).

A J domain is found at 10–75 (DYYADLGVSK…TKRREYDDLK (66 aa)). The CR-type zinc finger occupies 165–242 (GTTIPVELTG…CRGRGTVRRT (78 aa)). Zn(2+)-binding residues include Cys-178, Cys-181, Cys-194, Cys-197, Cys-216, Cys-219, Cys-230, and Cys-233. CXXCXGXG motif repeat units lie at residues 178-185 (CNTCHGSG), 194-201 (CGQCNGSG), 216-223 (CTNCGGTG), and 230-237 (CVDCRGRG).

Belongs to the DnaJ family. In terms of assembly, homodimer. It depends on Zn(2+) as a cofactor.

It is found in the cytoplasm. Its function is as follows. Participates actively in the response to hyperosmotic and heat shock by preventing the aggregation of stress-denatured proteins and by disaggregating proteins, also in an autonomous, DnaK-independent fashion. Unfolded proteins bind initially to DnaJ; upon interaction with the DnaJ-bound protein, DnaK hydrolyzes its bound ATP, resulting in the formation of a stable complex. GrpE releases ADP from DnaK; ATP binding to DnaK triggers the release of the substrate protein, thus completing the reaction cycle. Several rounds of ATP-dependent interactions between DnaJ, DnaK and GrpE are required for fully efficient folding. Also involved, together with DnaK and GrpE, in the DNA replication of plasmids through activation of initiation proteins. The polypeptide is Chaperone protein DnaJ 2 (Corynebacterium efficiens (strain DSM 44549 / YS-314 / AJ 12310 / JCM 11189 / NBRC 100395)).